The sequence spans 608 residues: MRTPQLALLQVFLLMFPDGVRPQPSSSPSGAVPTSLDLQPGTVGGTLQSSSEATATRPAMPGISTVVPTLVTPSAPGNRTVDLFPVLPICVCDLTPGACDINCCCDRDCYLLHPRTVFSFCLPGSVRSSSWVCVDNSLIFRSNSPFPSRVFMDSNGIRQFCVHVNNSKLNYFQKLQKVNATNFQDLAAEFGGESFTSTFQTQSPPSFYRAGDPILTYFPKWSVISLLRQPAGVGAAGLCAESNPAGFLESKSTTCTRFFKNLASSCTLDSALNAASYYNFTVLKVPRGMTDPQNMEFQVPVTLTSQANAPLLAGNTCQNVVSQVTYEIETNGTFGIQKVSVSLGQTNLTVEPGASLQQHFILHFRAFQQSTAASITSPRSGNPGYIVGKPLLALTGDVSYSMTLLRSQGNGSCSVNRHEVQFGVNAISGCKLRLKKADCSYLQQEIYQTLHGRPRPQHVAIFGNADPAQKGGWTRILNRHCNISAIICTSCCLIPVSLEIQVLWAYVGLLSNPQAHVSGVRFLYQCQSVRDSQQVTEVSLTTIVNFVDITQKPEPPRGQPKMDWKLPFDFFFPFRVAFSRGVSSQKCSVSPVLILCLLLLGVLNLETT.

Positions 1–22 (MRTPQLALLQVFLLMFPDGVRP) are cleaved as a signal peptide. A disordered region spans residues 23 to 58 (QPSSSPSGAVPTSLDLQPGTVGGTLQSSSEATATRP). Residues 23–586 (QPSSSPSGAV…AFSRGVSSQK (564 aa)) are Extracellular-facing. A compositionally biased stretch (polar residues) spans 45–54 (GTLQSSSEAT). N-linked (GlcNAc...) asparagine glycans are attached at residues Asn-78, Asn-179, and Asn-347. Residues 587–607 (CSVSPVLILCLLLLGVLNLET) traverse the membrane as a helical segment. Position 608 (Thr-608) is a topological domain, cytoplasmic.

Belongs to the tectonic family. Part of the tectonic-like complex (also named B9 complex).

Its subcellular location is the membrane. In terms of biological role, part of the tectonic-like complex which is required for tissue-specific ciliogenesis and may regulate ciliary membrane composition. May be involved in apoptosis regulation. Necessary for signal transduction through the sonic hedgehog (Shh) signaling pathway. This is Tectonic-3 (TCTN3) from Macaca fascicularis (Crab-eating macaque).